The following is a 176-amino-acid chain: ATP-dependent protease subunit HslV (176 aa).

The active site involves threonine 2. Na(+)-binding residues include glycine 157, cysteine 160, and threonine 163.

The protein belongs to the peptidase T1B family. HslV subfamily. A double ring-shaped homohexamer of HslV is capped on each side by a ring-shaped HslU homohexamer. The assembly of the HslU/HslV complex is dependent on binding of ATP.

The protein localises to the cytoplasm. It catalyses the reaction ATP-dependent cleavage of peptide bonds with broad specificity.. Allosterically activated by HslU binding. In terms of biological role, protease subunit of a proteasome-like degradation complex believed to be a general protein degrading machinery. This chain is ATP-dependent protease subunit HslV, found in Erwinia tasmaniensis (strain DSM 17950 / CFBP 7177 / CIP 109463 / NCPPB 4357 / Et1/99).